The primary structure comprises 303 residues: Probable endonuclease 4 (303 aa).

H75, H115, E151, D185, H188, H221, D234, H236, and E266 together coordinate Zn(2+).

The protein belongs to the AP endonuclease 2 family. Zn(2+) serves as cofactor.

It catalyses the reaction Endonucleolytic cleavage to 5'-phosphooligonucleotide end-products.. Its function is as follows. Endonuclease IV plays a role in DNA repair. It cleaves phosphodiester bonds at apurinic or apyrimidinic (AP) sites, generating a 3'-hydroxyl group and a 5'-terminal sugar phosphate. The polypeptide is Probable endonuclease 4 (Ureaplasma parvum serovar 3 (strain ATCC 700970)).